A 591-amino-acid polypeptide reads, in one-letter code: Aspartate--tRNA(Asp/Asn) ligase (591 aa).

Residue E175 coordinates L-aspartate. Residues 199 to 202 (QQFK) form an aspartate region. Positions 221 and 453 each coordinate L-aspartate. 221–223 (RDE) is an ATP binding site. Residue E486 participates in ATP binding. Residue R493 coordinates L-aspartate. Residue 538–541 (GIDR) participates in ATP binding.

It belongs to the class-II aminoacyl-tRNA synthetase family. Type 1 subfamily. As to quaternary structure, homodimer.

It localises to the cytoplasm. It catalyses the reaction tRNA(Asx) + L-aspartate + ATP = L-aspartyl-tRNA(Asx) + AMP + diphosphate. Its function is as follows. Aspartyl-tRNA synthetase with relaxed tRNA specificity since it is able to aspartylate not only its cognate tRNA(Asp) but also tRNA(Asn). Reaction proceeds in two steps: L-aspartate is first activated by ATP to form Asp-AMP and then transferred to the acceptor end of tRNA(Asp/Asn). This is Aspartate--tRNA(Asp/Asn) ligase from Cereibacter sphaeroides (strain ATCC 17029 / ATH 2.4.9) (Rhodobacter sphaeroides).